We begin with the raw amino-acid sequence, 59 residues long: Beta-defensin 134 (59 aa).

The N-terminal stretch at 1 to 19 (MKPLLVVFVFLFLWDPVLA) is a signal peptide. Cystine bridges form between Cys-25/Cys-51, Cys-31/Cys-45, and Cys-35/Cys-52.

Belongs to the beta-defensin family.

It localises to the secreted. Functionally, has antibacterial activity. The protein is Beta-defensin 134 (DEFB134) of Pan troglodytes (Chimpanzee).